We begin with the raw amino-acid sequence, 590 residues long: Dystrobrevin-1 (590 aa).

The segment covering 1-10 (MLWSNGGGGP) has biased composition (gly residues). Positions 1 to 25 (MLWSNGGGGPREPSSAPSPDHHRAM) are disordered. The ZZ-type zinc-finger motif lies at 259 to 315 (YHPVVCDACQVRSFTGFRYKCQRCANYQLCQSCFWRGRTSQNHSNEHEMKEYSSYKS). Positions 264, 267, 279, 282, 288, 291, 301, and 305 each coordinate Zn(2+). Residues 434–508 (SMVGDERTLI…EHLMAQLNTG (75 aa)) adopt a coiled-coil conformation. The essential for interaction with ctn-1 stretch occupies residues 468-590 (DGLAGLRDRK…DENGVTINGF (123 aa)). Residues 484–490 (MFEMQQR) form an essential for interaction with dys-1 region.

The protein belongs to the dystrophin family. Dystrobrevin subfamily. Component of the dystrophin glycoprotein complex (DGC). Interacts with dystrophin (dys-1) and syntrophin (stn-1) to form the DGC. Interacts (via C-terminus) with ctn-1 (via N-terminus); the interaction is required for localization of the dystrophin complex and ctn-1 near dense bodies in muscle cells. In terms of tissue distribution, from late embryogenesis to adulthood, expressed in neurons and muscles; particularly strong in the ventral nerve cord and in muscles of the body wall, head pharyngeal, and vulva; weaker in the intestinal muscle (at protein level).

The protein localises to the cytoplasm. In terms of biological role, plays a role in cholinergic transmission and as a functional partner of dystrophin (dys-1), necessary for muscle maintenance. Required for localization of ctn-1 near dense bodies in muscle cells. The protein is Dystrobrevin-1 of Caenorhabditis elegans.